A 403-amino-acid polypeptide reads, in one-letter code: Malate dehydrogenase, chloroplastic (403 aa).

A chloroplast-targeting transit peptide spans Met1–Asn80. NAD(+) contacts are provided by residues Gly89–Gly95 and Asp115. The substrate site is built by Arg162 and Arg168. Residues Asn175 and Ile198–Asn200 each bind NAD(+). Substrate is bound by residues Asn200 and Arg234. The Proton acceptor role is filled by His258. Met309 serves as a coordination point for NAD(+).

The protein belongs to the LDH/MDH superfamily. MDH type 1 family. Homodimer. In terms of tissue distribution, expressed in rosette leaves. Expressed in meristematic regions of roots and shoots, cotyledons, young leaves, trichomes, stamen, pollen, tapetum, gynoecium and ovules.

The protein resides in the plastid. Its subcellular location is the chloroplast stroma. The catalysed reaction is (S)-malate + NAD(+) = oxaloacetate + NADH + H(+). Catalyzes a reversible NAD-dependent dehydrogenase reaction involved in central metabolism and redox homeostasis between organelle compartments. Plays a key role in the metabolism of dark chloroplasts and non-green plastids. Essential for embryo viability. Plays an essential role in heterotrophic metabolism in embryos, and autotrophic metabolism in photosynthetic tissues as well. The protein is Malate dehydrogenase, chloroplastic of Arabidopsis thaliana (Mouse-ear cress).